A 668-amino-acid chain; its full sequence is MHANELEILELTQQLNLHNYHYYVDDNPTIPDVEYDRLLKRLIELETQSPEFAKADSPTQRVGGEALAKFEQITHLKPMLSLDNVFDETEFNGFHSRITDKVGTALSYCCEPKLDGLAVSIVYRDGVFERAATRGDGQTGENITENVRTIKSIPLKLRGDNFPPLVEVRGEVIMPHKAFNALNERARAKGEKLFVNPRNAAAGSLRQLDSKITASRALGFYAYALGVVEPESWELADSHYGQLEQLRSWGVPVSQEVKVCDSVTEVMDYYNDIQQRRSSLDFEIDGVVLKVNQIAHQLSLGFVAKAPRWATAFKFPAQEEMTLLEGVDFQVGRTGAVTPVARLKPVFVGGVTVSNATLHNADEIARLGVKVGDTIIIRRAGDVIPQIVAIVADKRPDDAQDIVFPERCPVCDSEVERIEGEAVARCSGGLFCEAQRKEAIKHFASRKALDIDGMGDKVVEQLIDKELVESPADLFKLTASAMTMLERMGMKSATKLVAAIEVAKETTFARFLYALGIREVGEATAANLAAYFKTLDALKGASAEEFIKVDDVGAIVAAHLAHFLAQPHNLEVIDKLIAVGVSWPAIEEVAEEDLSLKGQTWVLTGTLTQLNRNDAKAQLQALGAKVAGSVSKNTDCLVAGAAAGSKLTKAQELGVKVIDEEALIAILS.

Residues 32–36, 81–82, and Glu111 contribute to the NAD(+) site; these read DVEYD and SL. The N6-AMP-lysine intermediate role is filled by Lys113. The NAD(+) site is built by Arg134, Glu171, Lys290, and Lys314. 4 residues coordinate Zn(2+): Cys408, Cys411, Cys426, and Cys432. Positions 591–668 constitute a BRCT domain; sequence EEDLSLKGQT…DEEALIAILS (78 aa).

It belongs to the NAD-dependent DNA ligase family. LigA subfamily. The cofactor is Mg(2+). Mn(2+) is required as a cofactor.

It carries out the reaction NAD(+) + (deoxyribonucleotide)n-3'-hydroxyl + 5'-phospho-(deoxyribonucleotide)m = (deoxyribonucleotide)n+m + AMP + beta-nicotinamide D-nucleotide.. Functionally, DNA ligase that catalyzes the formation of phosphodiester linkages between 5'-phosphoryl and 3'-hydroxyl groups in double-stranded DNA using NAD as a coenzyme and as the energy source for the reaction. It is essential for DNA replication and repair of damaged DNA. This is DNA ligase from Shewanella piezotolerans (strain WP3 / JCM 13877).